Here is a 473-residue protein sequence, read N- to C-terminus: N-lysine methyltransferase SETD6 (473 aa).

Position 39 is an N6-methylated lysine; by autocatalysis (K39). An SET domain is found at 60–286 (PPAQVAVSRQ…KGHEIFNTYG (227 aa)). 73–75 (AGY) contacts S-adenosyl-L-methionine. W122 serves as a coordination point for substrate. K179 is modified (N6-methylated lysine; by autocatalysis). Y223 contributes to the S-adenosyl-L-methionine binding site. Substrate-binding residues include S224 and Q226. Position 251–252 (251–252 (NH)) interacts with S-adenosyl-L-methionine. 2 residues coordinate substrate: Y262 and Y297. Y297 is an S-adenosyl-L-methionine binding site. K372 is modified (N6-methylated lysine; by autocatalysis).

Belongs to the class V-like SAM-binding methyltransferase superfamily. Histone-lysine methyltransferase family. SETD6 subfamily. In terms of assembly, monomer, homodimer and homotrimer; these structures are stabilized in the presence of S-adenosyl-L-methionine (SAM). In terms of processing, automethylated; Lys-39 and Lys-179 serve as the major automethylation sites.

The protein resides in the nucleus. The enzyme catalyses L-lysyl-[protein] + S-adenosyl-L-methionine = N(6)-methyl-L-lysyl-[protein] + S-adenosyl-L-homocysteine + H(+). The catalysed reaction is L-lysyl(8)-[histone H2AZ] + S-adenosyl-L-methionine = N(6)-methyl-L-lysyl(8)-[histone H2AZ] + S-adenosyl-L-homocysteine + H(+). Activated by automethylation. Protein-lysine N-methyltransferase. Monomethylates 'Lys-310' of the RELA subunit of NF-kappa-B complex, leading to down-regulation of NF-kappa-B transcription factor activity. Monomethylates 'Lys-8' of H2AZ (H2AZK8me1). Required for the maintenance of embryonic stem cell self-renewal. Methylates PAK4. This Homo sapiens (Human) protein is N-lysine methyltransferase SETD6.